A 429-amino-acid chain; its full sequence is Cyclin-B2-1 (429 aa).

This sequence belongs to the cyclin family. Cyclin AB subfamily. Interacts with CDC20-1 and CDC20-2. In terms of tissue distribution, expressed in roots, stems, leaves, flowers and siliques.

This is Cyclin-B2-1 (CYCB2-1) from Arabidopsis thaliana (Mouse-ear cress).